A 79-amino-acid polypeptide reads, in one-letter code: Probable Fe(2+)-trafficking protein (79 aa).

The protein belongs to the Fe(2+)-trafficking protein family. Monomer.

Functionally, could be a mediator in iron transactions between iron acquisition and iron-requiring processes, such as synthesis and/or repair of Fe-S clusters in biosynthetic enzymes. This chain is Probable Fe(2+)-trafficking protein, found in Blochmanniella floridana.